The primary structure comprises 352 residues: uncharacterized protein (352 aa).

The next 8 membrane-spanning stretches (helical) occupy residues 6–26 (FIFL…IINP), 30–50 (FHIV…IINI), 76–96 (IFLT…FVII), 151–171 (EFII…LPFL), 197–217 (FILV…LPLI), 226–246 (VKVD…IEGL), 291–311 (WLPI…ASFA), and 330–350 (LIGG…AKIF).

Belongs to the CitM (TC 2.A.11) transporter family.

The protein localises to the cell membrane. This is an uncharacterized protein from Methanocaldococcus jannaschii (strain ATCC 43067 / DSM 2661 / JAL-1 / JCM 10045 / NBRC 100440) (Methanococcus jannaschii).